A 115-amino-acid chain; its full sequence is NADH-ubiquinone oxidoreductase chain 3 (115 aa).

3 helical membrane passes run 4 to 24, 55 to 75, and 87 to 107; these read LTVL…AFWL, FFLV…LLPL, and MMLT…YEWM.

Belongs to the complex I subunit 3 family. Core subunit of respiratory chain NADH dehydrogenase (Complex I) which is composed of 45 different subunits. Interacts with TMEM186. Interacts with TMEM242.

The protein localises to the mitochondrion inner membrane. The enzyme catalyses a ubiquinone + NADH + 5 H(+)(in) = a ubiquinol + NAD(+) + 4 H(+)(out). Its function is as follows. Core subunit of the mitochondrial membrane respiratory chain NADH dehydrogenase (Complex I) which catalyzes electron transfer from NADH through the respiratory chain, using ubiquinone as an electron acceptor. Essential for the catalytic activity of complex I. The polypeptide is NADH-ubiquinone oxidoreductase chain 3 (Peromyscus slevini (Slevin's mouse)).